We begin with the raw amino-acid sequence, 326 residues long: Peroxidase 6 (326 aa).

Positions 1–20 (MKSFGLCLFILVSSPCLLQA) are cleaved as a signal peptide. The N-linked (GlcNAc...) asparagine glycan is linked to Asn21. 4 disulfide bridges follow: Cys31-Cys112, Cys64-Cys69, Cys118-Cys318, and Cys197-Cys228. His62 functions as the Proton acceptor in the catalytic mechanism. The Ca(2+) site is built by Asp63, Val66, Gly68, Asp70, and Ser72. N-linked (GlcNAc...) asparagine glycosylation occurs at Asn163. His190 lines the heme b pocket. Thr191 is a Ca(2+) binding site. N-linked (GlcNAc...) asparagine glycans are attached at residues Asn206 and Asn230. Residues Asp242, Thr245, and Asp250 each coordinate Ca(2+). The N-linked (GlcNAc...) asparagine glycan is linked to Asn274.

Belongs to the peroxidase family. Classical plant (class III) peroxidase subfamily. It depends on heme b as a cofactor. Ca(2+) is required as a cofactor.

It is found in the secreted. The enzyme catalyses 2 a phenolic donor + H2O2 = 2 a phenolic radical donor + 2 H2O. Its function is as follows. Removal of H(2)O(2), oxidation of toxic reductants, biosynthesis and degradation of lignin, suberization, auxin catabolism, response to environmental stresses such as wounding, pathogen attack and oxidative stress. These functions might be dependent on each isozyme/isoform in each plant tissue. In Arabidopsis thaliana (Mouse-ear cress), this protein is Peroxidase 6 (PER6).